The primary structure comprises 200 residues: HTH-type transcriptional regulator Hpr (200 aa).

The HTH marR-type domain maps to 13 to 157; sequence AMLFSQRIAQ…MMCIVRNIYG (145 aa). Positions 63–86 form a DNA-binding region, H-T-H motif; sequence ISEIAKFGVMHVSTAFNFSKKLEE.

As to quaternary structure, homodimer.

Its function is as follows. Negative regulator of protease production and sporulation. In Geobacillus thermodenitrificans (strain NG80-2), this protein is HTH-type transcriptional regulator Hpr.